The primary structure comprises 371 residues: Deoxyhypusine synthase (371 aa).

Residues 112 to 116 (SNLVT), 138 to 140 (SAG), Glu-144, and Asp-245 each bind NAD(+). 143-144 (EE) contacts spermidine. Position 250 (Asp-250) interacts with spermidine. Gly-291 is an NAD(+) binding site. His-296 is a spermidine binding site. 316–317 (TG) contributes to the NAD(+) binding site. Spermidine contacts are provided by residues 322 to 324 (GSD) and 331 to 337 (EAVSWGK). Lys-337 serves as the catalytic Nucleophile. 350–351 (EA) is a binding site for NAD(+).

This sequence belongs to the deoxyhypusine synthase family. NAD(+) is required as a cofactor.

The catalysed reaction is [eIF5A protein]-L-lysine + spermidine = [eIF5A protein]-deoxyhypusine + propane-1,3-diamine. The protein operates within protein modification; eIF5A hypusination. In terms of biological role, catalyzes the NAD-dependent oxidative cleavage of spermidine and the subsequent transfer of the butylamine moiety of spermidine to the epsilon-amino group of a critical lysine residue of the eIF-5A precursor protein to form the intermediate deoxyhypusine residue. This is the first step of the post-translational modification of that lysine into an unusual amino acid residue named hypusine. Hypusination is unique to mature eIF-5A factor and is essential for its function. The sequence is that of Deoxyhypusine synthase from Caenorhabditis elegans.